The sequence spans 202 residues: Adenylyl-sulfate kinase (202 aa).

35-42 provides a ligand contact to ATP; it reads GLSGSGKS. The Phosphoserine intermediate role is filled by S109.

This sequence belongs to the APS kinase family.

It catalyses the reaction adenosine 5'-phosphosulfate + ATP = 3'-phosphoadenylyl sulfate + ADP + H(+). It participates in sulfur metabolism; hydrogen sulfide biosynthesis; sulfite from sulfate: step 2/3. Its function is as follows. Catalyzes the synthesis of activated sulfate. In Bacteroides fragilis (strain YCH46), this protein is Adenylyl-sulfate kinase.